Consider the following 335-residue polypeptide: Foldase protein PrsA (335 aa).

The N-terminal stretch at 1 to 20 (MKKKIFAGAVTLLSVAVLAA) is a signal peptide. Cys-21 carries N-palmitoyl cysteine lipidation. A lipid anchor (S-diacylglycerol cysteine) is attached at Cys-21. The 98-residue stretch at 142-239 (TPEVTAQIIK…ASYYIVKLVK (98 aa)) folds into the PpiC domain. Residues 300 to 335 (TGSSTSSSSAASSSKTSESSSAAESSSKEASSSAAE) form a disordered region. Positions 302–335 (SSTSSSSAASSSKTSESSSAAESSSKEASSSAAE) are enriched in low complexity.

It belongs to the PrsA family.

It is found in the cell membrane. It carries out the reaction [protein]-peptidylproline (omega=180) = [protein]-peptidylproline (omega=0). Plays a major role in protein secretion by helping the post-translocational extracellular folding of several secreted proteins. The protein is Foldase protein PrsA of Streptococcus sanguinis (strain SK36).